The primary structure comprises 161 residues: Small ribosomal subunit protein uS9 (161 aa).

It belongs to the universal ribosomal protein uS9 family.

This chain is Small ribosomal subunit protein uS9, found in Rickettsia felis (strain ATCC VR-1525 / URRWXCal2) (Rickettsia azadi).